A 222-amino-acid polypeptide reads, in one-letter code: 7-cyano-7-deazaguanine synthase (222 aa).

9–19 (LSGGLDSATAA) serves as a coordination point for ATP. Zn(2+)-binding residues include C190, C198, C201, and C204.

The protein belongs to the QueC family. Requires Zn(2+) as cofactor.

The catalysed reaction is 7-carboxy-7-deazaguanine + NH4(+) + ATP = 7-cyano-7-deazaguanine + ADP + phosphate + H2O + H(+). It participates in purine metabolism; 7-cyano-7-deazaguanine biosynthesis. In terms of biological role, catalyzes the ATP-dependent conversion of 7-carboxy-7-deazaguanine (CDG) to 7-cyano-7-deazaguanine (preQ(0)). The protein is 7-cyano-7-deazaguanine synthase of Synechococcus sp. (strain RCC307).